We begin with the raw amino-acid sequence, 614 residues long: Autophagy-related protein 22-1 (614 aa).

The disordered stretch occupies residues 1–29 (MQNCTNSPEDQAASVCPPPPQFPGDDTRP). Asn3 carries an N-linked (GlcNAc...) asparagine glycan. A run of 4 helical transmembrane segments spans residues 41–61 (YGWAAEVFTVCAMGSFLPITL), 126–146 (TASFAMYTFSLSVFIQAILII), 160–180 (MLLVIFALIGSVSTMLFLAVV), and 185–205 (LLGGLFAIISNTCFGASFVLL). The segment at 229–254 (PTGTSHDSTSTADGPGQTDGTETTSL) is disordered. Residues 230–254 (TGTSHDSTSTADGPGQTDGTETTSL) show a composition bias toward polar residues. 8 helical membrane passes run 291-311 (GIGIGYIGAVILQAICILVVV), 322-342 (LVLFLIGLWWFTFTIPAAMWL), 383-403 (ILLFLAAWFLLSDGIATVSGT), 417-437 (AALGLINVIAMIAGVFGAFSW), 452-472 (IVACIILFELVPLYGLLGFIP), 486-506 (WEMYPLGVIYGLVMGGLSSYC), 523-545 (YALYAITDKGSSVFGPAIVGIIT), and 554-574 (AFVFLAVLILLPLPLMLLVDV).

It belongs to the ATG22 family.

The protein localises to the vacuole membrane. Functionally, vacuolar effluxer which mediate the efflux of amino acids resulting from autophagic degradation. The release of autophagic amino acids allows the maintenance of protein synthesis and viability during nitrogen starvation. In Aspergillus niger (strain ATCC MYA-4892 / CBS 513.88 / FGSC A1513), this protein is Autophagy-related protein 22-1 (atg22-1).